Consider the following 260-residue polypeptide: MNNPVLKPLVIKIGGAILEKESALNALLNVISQLKNKQVVLVHGGGCVVDEMLAQAGFTTEKKHGLRVTPKEQVGLISGALAGTVNKAIVGTANSMDLAAVGLSLNDGDMISCTLSTQDLGQVGVPQTNNSKLLDCLLKAKFLPVISSIGALDNGDLVNVNADDAAVAICQLLNAELLLLTDVNGVKDADGEYLSSLNAEQAQKLIEQGVIAGGMTAKVNAALHAAQQLRRSIAVASWQSPEQITQLLDGHGVGTQIQPN.

Substrate is bound by residues 45-46, Arg-67, and Asn-159; that span reads GG.

Belongs to the acetylglutamate kinase family. ArgB subfamily.

It is found in the cytoplasm. The enzyme catalyses N-acetyl-L-glutamate + ATP = N-acetyl-L-glutamyl 5-phosphate + ADP. It participates in amino-acid biosynthesis; L-arginine biosynthesis; N(2)-acetyl-L-ornithine from L-glutamate: step 2/4. Its function is as follows. Catalyzes the ATP-dependent phosphorylation of N-acetyl-L-glutamate. This is Acetylglutamate kinase from Colwellia psychrerythraea (strain 34H / ATCC BAA-681) (Vibrio psychroerythus).